The chain runs to 618 residues: Sodium/iodide cotransporter (618 aa).

Residues 1–14 are Extracellular-facing; the sequence is MEGAEAGARATFGA. A helical transmembrane segment spans residues 15–31; sequence WDYGVFATMLLVSTGIG. Topologically, residues 32-56 are cytoplasmic; the sequence is LWVGLARGGQRSADDFFTGGRQLAA. Residues 57–80 form a discontinuously helical membrane-spanning segment; sequence VPVGLSLAASFMSAVQVLGVPAEA. Na(+)-binding residues include serine 69, valine 71, and glutamine 72. An iodide-binding site is contributed by valine 76. Over 81-84 the chain is Extracellular; the sequence is ARYG. A helical transmembrane segment spans residues 85 to 105; that stretch reads LKFLWMCAGQLLNSLLTAFLF. Methionine 90 contacts iodide. Over 106–130 the chain is Cytoplasmic; the sequence is LPIFYRLGLTSTYQYLELRFSRAVR. The chain crosses the membrane as a helical span at residues 131–157; sequence LCGTLQYLVATMLYTGIVIYAPALILN. Tyrosine 144 is a binding site for Na(+). The Extracellular segment spans residues 158-163; the sequence is QVTGLD. Residues 164-181 traverse the membrane as a helical segment; the sequence is IWASLLSTGIICTLYTTV. The Cytoplasmic segment spans residues 182-189; it reads GGMKAVVW. The chain crosses the membrane as a helical span at residues 190–208; that stretch reads TDVFQVVVMLVGFWVILAR. Residues 209 to 243 lie on the Extracellular side of the membrane; that stretch reads GVILLGGPRNVLSLAQNHSRINLMDFDPDPRSRYT. A discontinuously helical membrane pass occupies residues 244–266; that stretch reads FWTFIVGGTLVWLSMYGVNQAQV. Tryptophan 255 is an iodide binding site. Residue methionine 258 coordinates Na(+). Residues 267-278 lie on the Cytoplasmic side of the membrane; it reads QRYVACHTEGKA. A helical transmembrane segment spans residues 279-301; it reads KLALLVNQLGLFLIVASAACCGI. The Extracellular portion of the chain corresponds to 302 to 335; the sequence is VMFVYYKDCDPLLTGRISAPDQYMPLLVLDIFED. The helical transmembrane segment at 336 to 363 threads the bilayer; sequence LPGVPGLFLACAYSGTLSTASTSINAMA. Topologically, residues 364–386 are cytoplasmic; it reads AVTVEDLIKPRMPGLAPRKLVFI. The chain crosses the membrane as a helical span at residues 387–408; that stretch reads SKGLSFIYGSACLTVAALSSLL. The Extracellular segment spans residues 409-411; that stretch reads GGG. The chain crosses the membrane as a helical span at residues 412–437; that stretch reads VLQGSFTVMGVISGPLLGAFTLGMLL. Leucine 413 lines the iodide pocket. The Na(+) site is built by serine 416 and phenylalanine 417. Iodide is bound at residue phenylalanine 417. At 438 to 441 the chain is on the cytoplasmic side; that stretch reads PACN. Residues 442–465 form a helical membrane-spanning segment; the sequence is TPGVLSGLAAGLAVSLWVAVGATL. At 466–520 the chain is on the extracellular side; the sequence is YPPGEQTMGVLPTSAAGCTNDSVLLGPPGATNASNGIPSSGMDTGRPALADTFYA. N-linked (GlcNAc...) asparagine glycosylation is found at asparagine 485 and asparagine 497. A helical transmembrane segment spans residues 521 to 545; it reads ISYLYYGALGTLTTMLCGALISYLT. Over 546 to 618 the chain is Cytoplasmic; it reads GPTKRSSLGP…YLGHDVETNL (73 aa). Serine 551 is subject to Phosphoserine; by PKA. The disordered stretch occupies residues 587 to 618; the sequence is EDIPAVTKKPPGLKPGAETHPLYLGHDVETNL.

This sequence belongs to the sodium:solute symporter (SSF) (TC 2.A.21) family. As to quaternary structure, monomer.

It localises to the cell membrane. It is found in the cytoplasm. The catalysed reaction is iodide(out) + 2 Na(+)(out) = iodide(in) + 2 Na(+)(in). The enzyme catalyses chlorate(out) + 2 Na(+)(out) = chlorate(in) + 2 Na(+)(in). It carries out the reaction thiocyanate(out) + 2 Na(+)(out) = thiocyanate(in) + 2 Na(+)(in). It catalyses the reaction nitrate(out) + 2 Na(+)(out) = nitrate(in) + 2 Na(+)(in). The catalysed reaction is selenocyanate(out) + 2 Na(+)(out) = selenocyanate(in) + 2 Na(+)(in). Its activity is regulated as follows. Perchlorate inhibits iodide transport activity. Oxyanions inhibit iodide transport activity by blocking the binding sites for iodide and one of the sodium ions. Functionally, sodium:iodide symporter that mediates the transport of iodide into the thyroid gland. Can also mediate the transport of chlorate, thiocynate, nitrate and selenocynate. The sequence is that of Sodium/iodide cotransporter (Slc5a5) from Rattus norvegicus (Rat).